The chain runs to 549 residues: Coiled-coil domain-containing protein 102A (549 aa).

Disordered stretches follow at residues 1-61 (MSHG…TAPA), 135-195 (LAGA…GSQE), and 207-248 (PEEP…EEDA). Residues serine 12, serine 26, and serine 28 each carry the phosphoserine modification. The span at 37–55 (SLPPTPPSGTPSPGPPPSL) shows a compositional bias: pro residues. Residues 69–160 (ESREELRLRE…ARGRELARLR (92 aa)) are a coiled coil. 2 stretches are compositionally biased toward basic and acidic residues: residues 135-158 (LAGA…ELAR) and 165-187 (AADK…DIGA). Coiled coils occupy residues 263–398 (KVLL…NASA) and 426–517 (KLKK…NAPL). Disordered regions lie at residues 472 to 496 (ELDE…QSEN) and 509 to 549 (RRQQ…IQVA). Residues 530–549 (EAGDGASDLDEDEDLQIQVA) show a composition bias toward acidic residues. A Phosphoserine modification is found at serine 536.

This Mus musculus (Mouse) protein is Coiled-coil domain-containing protein 102A (Ccdc102a).